A 176-amino-acid polypeptide reads, in one-letter code: N5-carboxyaminoimidazole ribonucleotide mutase (176 aa).

Serine 14, aspartate 17, and arginine 44 together coordinate substrate.

This sequence belongs to the AIR carboxylase family. Class I subfamily.

The enzyme catalyses 5-carboxyamino-1-(5-phospho-D-ribosyl)imidazole + H(+) = 5-amino-1-(5-phospho-D-ribosyl)imidazole-4-carboxylate. Its pathway is purine metabolism; IMP biosynthesis via de novo pathway; 5-amino-1-(5-phospho-D-ribosyl)imidazole-4-carboxylate from 5-amino-1-(5-phospho-D-ribosyl)imidazole (N5-CAIR route): step 2/2. Its function is as follows. Catalyzes the conversion of N5-carboxyaminoimidazole ribonucleotide (N5-CAIR) to 4-carboxy-5-aminoimidazole ribonucleotide (CAIR). The polypeptide is N5-carboxyaminoimidazole ribonucleotide mutase (Synechocystis sp. (strain ATCC 27184 / PCC 6803 / Kazusa)).